A 149-amino-acid chain; its full sequence is Transcriptional repressor NrdR (149 aa).

A zinc finger lies at 3–34 (CPFCQSDDTKVLDTRLIDDGSQVRRRRECVSC). In terms of domain architecture, ATP-cone spans 49-139 (PHLIKSDDSR…VYRQFQDIEA (91 aa)).

Belongs to the NrdR family. Requires Zn(2+) as cofactor.

Negatively regulates transcription of bacterial ribonucleotide reductase nrd genes and operons by binding to NrdR-boxes. In Ruthia magnifica subsp. Calyptogena magnifica, this protein is Transcriptional repressor NrdR.